Reading from the N-terminus, the 146-residue chain is VHLTAEEKSLVTGLWGKVNVDEVGGEALGRLLIVYPWTQRFFDSFGDLSTPDAVMGNAKVKAHGKKVLNSFSDGLKNLDNLKGTFAKLSELHCDKLHVDPENFKLLGNVLVCVLAHHFGKEFTPQVQAAYQKVVAGVANALAHKYH.

V1 carries the N-acetylvaline modification. Residues 2–146 (HLTAEEKSLV…VANALAHKYH (145 aa)) form the Globin domain. A Phosphothreonine modification is found at T12. S44 is modified (phosphoserine). Position 59 is an N6-acetyllysine (K59). A heme b-binding site is contributed by H63. K82 carries the N6-acetyllysine modification. H92 lines the heme b pocket. Residue C93 is modified to S-nitrosocysteine. The residue at position 144 (K144) is an N6-acetyllysine.

Belongs to the globin family. In terms of assembly, heterotetramer of two alpha chains and two beta chains. Red blood cells.

In terms of biological role, involved in oxygen transport from the lung to the various peripheral tissues. The chain is Hemoglobin subunit beta (HBB) from Vulpes vulpes (Red fox).